The chain runs to 116 residues: Non-specific lipid-transfer protein D, cotyledon-specific isoform (116 aa).

An N-terminal signal peptide occupies residues 1-24 (MKNIFFSVFFLLSFLLCLANVSEA). 4 disulfides stabilise this stretch: Cys28/Cys76, Cys38/Cys53, Cys54/Cys98, and Cys74/Cys112.

The protein belongs to the plant LTP family.

Its function is as follows. Plant non-specific lipid-transfer proteins transfer phospholipids as well as galactolipids across membranes. May play a role in wax or cutin deposition in the cell walls of expanding epidermal cells and certain secretory tissues. The chain is Non-specific lipid-transfer protein D, cotyledon-specific isoform from Ricinus communis (Castor bean).